Reading from the N-terminus, the 147-residue chain is Large ribosomal subunit protein uL15 (147 aa).

The tract at residues 1-57 (MDLSNLSPAPGSTKARKRLGRGPGSGNGTTAGRGNKGHNSRSGGGVRPGFEGGQMPL) is disordered. Composition is skewed to gly residues over residues 21 to 31 (RGPGSGNGTTA) and 42 to 52 (SGGGVRPGFEG).

The protein belongs to the universal ribosomal protein uL15 family. As to quaternary structure, part of the 50S ribosomal subunit.

In terms of biological role, binds to the 23S rRNA. The chain is Large ribosomal subunit protein uL15 from Desulfosudis oleivorans (strain DSM 6200 / JCM 39069 / Hxd3) (Desulfococcus oleovorans).